Here is a 667-residue protein sequence, read N- to C-terminus: DNA ligase (667 aa).

Residues 34–38 (DQEYD), 83–84 (SL), and E114 contribute to the NAD(+) site. K116 (N6-AMP-lysine intermediate) is an active-site residue. Residues R137, E170, K286, and K310 each contribute to the NAD(+) site. Zn(2+) contacts are provided by C404, C407, C422, and C427. The region spanning 588 to 667 (HLAQKFENYR…EFQQLLSKED (80 aa)) is the BRCT domain.

It belongs to the NAD-dependent DNA ligase family. LigA subfamily. Mg(2+) is required as a cofactor. Mn(2+) serves as cofactor.

The enzyme catalyses NAD(+) + (deoxyribonucleotide)n-3'-hydroxyl + 5'-phospho-(deoxyribonucleotide)m = (deoxyribonucleotide)n+m + AMP + beta-nicotinamide D-nucleotide.. Functionally, DNA ligase that catalyzes the formation of phosphodiester linkages between 5'-phosphoryl and 3'-hydroxyl groups in double-stranded DNA using NAD as a coenzyme and as the energy source for the reaction. It is essential for DNA replication and repair of damaged DNA. The protein is DNA ligase of Spiroplasma citri.